The following is a 416-amino-acid chain: Queuine tRNA-ribosyltransferase accessory subunit 2 (416 aa).

C350, C352, C355, and H381 together coordinate Zn(2+).

This sequence belongs to the queuine tRNA-ribosyltransferase family. QTRT2 subfamily. Heterodimer of a catalytic subunit qtrt1 and an accessory subunit qtrt2. Requires Zn(2+) as cofactor.

It localises to the cytoplasm. The protein resides in the mitochondrion outer membrane. Its function is as follows. Non-catalytic subunit of the queuine tRNA-ribosyltransferase (TGT) that catalyzes the base-exchange of a guanine (G) residue with queuine (Q) at position 34 (anticodon wobble position) in tRNAs with GU(N) anticodons (tRNA-Asp, -Asn, -His and -Tyr), resulting in the hypermodified nucleoside queuosine (7-(((4,5-cis-dihydroxy-2-cyclopenten-1-yl)amino)methyl)-7-deazaguanosine). The sequence is that of Queuine tRNA-ribosyltransferase accessory subunit 2 from Danio rerio (Zebrafish).